Here is a 286-residue protein sequence, read N- to C-terminus: Small ribosomal subunit protein uS2 (286 aa).

Residues 257 to 286 (KDNKSNKSNTINADENIKESDLIGGSNNEG) are disordered.

This sequence belongs to the universal ribosomal protein uS2 family.

The protein is Small ribosomal subunit protein uS2 of Ehrlichia ruminantium (strain Gardel).